A 51-amino-acid chain; its full sequence is uncharacterized protein (51 aa).

Residues 1–24 (MGGRFSGRVGIEKGGHPPSAADHS) are disordered.

This is an uncharacterized protein from Escherichia coli.